We begin with the raw amino-acid sequence, 231 residues long: Large ribosomal subunit protein uL1 (231 aa).

Belongs to the universal ribosomal protein uL1 family. As to quaternary structure, part of the 50S ribosomal subunit.

Its function is as follows. Binds directly to 23S rRNA. The L1 stalk is quite mobile in the ribosome, and is involved in E site tRNA release. In terms of biological role, protein L1 is also a translational repressor protein, it controls the translation of the L11 operon by binding to its mRNA. This chain is Large ribosomal subunit protein uL1, found in Agrobacterium fabrum (strain C58 / ATCC 33970) (Agrobacterium tumefaciens (strain C58)).